The chain runs to 200 residues: NADH-quinone oxidoreductase subunit B (200 aa).

4 residues coordinate [4Fe-4S] cluster: Cys79, Cys80, Cys144, and Cys174.

Belongs to the complex I 20 kDa subunit family. NDH-1 is composed of 14 different subunits. Subunits NuoB, C, D, E, F, and G constitute the peripheral sector of the complex. Requires [4Fe-4S] cluster as cofactor.

The protein localises to the cell inner membrane. It carries out the reaction a quinone + NADH + 5 H(+)(in) = a quinol + NAD(+) + 4 H(+)(out). In terms of biological role, NDH-1 shuttles electrons from NADH, via FMN and iron-sulfur (Fe-S) centers, to quinones in the respiratory chain. The immediate electron acceptor for the enzyme in this species is believed to be ubiquinone. Couples the redox reaction to proton translocation (for every two electrons transferred, four hydrogen ions are translocated across the cytoplasmic membrane), and thus conserves the redox energy in a proton gradient. This chain is NADH-quinone oxidoreductase subunit B, found in Caulobacter vibrioides (strain NA1000 / CB15N) (Caulobacter crescentus).